The following is a 210-amino-acid chain: HTH-type transcriptional repressor FabR (210 aa).

The HTH tetR-type domain occupies 10 to 70; it reads KTRRSLVEAA…TMVDESGLML (61 aa). The H-T-H motif DNA-binding region spans 33–52; that stretch reads SLREVAREAGIAPTSFYRHF.

Homodimer.

The protein resides in the cytoplasm. Functionally, represses the transcription of fabB, involved in unsaturated fatty acid (UFA) biosynthesis. By controlling UFA production, FabR directly influences the physical properties of the membrane bilayer. In Salmonella arizonae (strain ATCC BAA-731 / CDC346-86 / RSK2980), this protein is HTH-type transcriptional repressor FabR.